Reading from the N-terminus, the 134-residue chain is Submaxillary gland androgen-regulated protein 3A (134 aa).

The first 22 residues, 1-22, serve as a signal peptide directing secretion; the sequence is MKSLTWILGLWALAACFTPGES. Positions 19–134 are disordered; it reads PGESQRGPRG…TDPALPTPAP (116 aa). Composition is skewed to pro residues over residues 28-43, 50-85, and 94-119; these read GPYP…PPCF, VPPP…PPYG, and LPPP…PPFF.

It belongs to the PROL1/PROL3 family.

The protein localises to the secreted. May play a role in protection or detoxification. The chain is Submaxillary gland androgen-regulated protein 3A (SMR3A) from Homo sapiens (Human).